The chain runs to 371 residues: Opsin, ultraviolet-sensitive (371 aa).

At 1–52 (MSNDSIHWEARYLPAGPPRLLGWNVPAEELIHIPEHWLVYPEPNPSLHYLLA) the chain is on the extracellular side. N-linked (GlcNAc...) asparagine glycosylation occurs at N3. Residues 53–73 (LLYILFTFLALLGNGLVIWIF) form a helical membrane-spanning segment. Residues 74-84 (CAAKSLRTPSN) are Cytoplasmic-facing. The chain crosses the membrane as a helical span at residues 85 to 105 (MFVVNLAICDFFMMIKTPIFI). The Extracellular segment spans residues 106–121 (YNSFNTGFALGNLGCQ). Residues C120 and C197 are joined by a disulfide bond. Residues 122–142 (IFAVIGSLTGIGAAITNAAIA) traverse the membrane as a helical segment. Residues 143–161 (YDRYSTIARPLDGKLSRGQ) lie on the Cytoplasmic side of the membrane. The chain crosses the membrane as a helical span at residues 162–182 (VILFIVLIWTYTIPWALMPVM). Residues 183 to 209 (GVWGRFVPEGFLTSCSFDYLTDTNEIR) are Extracellular-facing. Residues 210 to 230 (IFVATIFTFSYCIPMILIIYY) traverse the membrane as a helical segment. Residues 231-278 (YSQIVSHVVNHEKALREQAKKMNVDSLRSNANTSSQSAEIRIAKAAIT) lie on the Cytoplasmic side of the membrane. A helical membrane pass occupies residues 279–299 (ICFLYVLSWTPYGVMSMIGAF). Residues 300 to 302 (GNK) are Extracellular-facing. The chain crosses the membrane as a helical span at residues 303 to 323 (ALLTPGVTMIPACTCKAVACL). An N6-(retinylidene)lysine modification is found at K318. Residues 324 to 371 (DPYVYAISHPKYRLELQKRLPWLELQEKPISDSTSTTTETVNTPPASS) lie on the Cytoplasmic side of the membrane.

Belongs to the G-protein coupled receptor 1 family. Opsin subfamily. In terms of processing, phosphorylated on some or all of the serine and threonine residues present in the C-terminal region. Expressed in the dorsal region of the retina.

The protein resides in the membrane. In terms of biological role, visual pigments are the light-absorbing molecules that mediate vision. They consist of an apoprotein, opsin, covalently linked to 11-cis-retinal. The protein is Opsin, ultraviolet-sensitive (UVOP) of Apis mellifera (Honeybee).